We begin with the raw amino-acid sequence, 151 residues long: Small ribosomal subunit protein bS6 (151 aa).

The segment at 97 to 151 (EAEPSAMMQKRDRDDRKDRDRGDRPRRRDDDFGGGDRGDRGDRGDRPERNFGGEN) is disordered. The segment covering 105–151 (QKRDRDDRKDRDRGDRPRRRDDDFGGGDRGDRGDRGDRPERNFGGEN) has biased composition (basic and acidic residues).

The protein belongs to the bacterial ribosomal protein bS6 family.

Its function is as follows. Binds together with bS18 to 16S ribosomal RNA. In Methylorubrum populi (strain ATCC BAA-705 / NCIMB 13946 / BJ001) (Methylobacterium populi), this protein is Small ribosomal subunit protein bS6.